Reading from the N-terminus, the 663-residue chain is Polyunsaturated fatty acid lipoxygenase ALOX15 (663 aa).

Positions 2 to 115 (GVYRIRVSTG…ILSLPEGTGC (114 aa)) constitute a PLAT domain. One can recognise a Lipoxygenase domain in the interval 116–663 (TVVEDSQGLF…PSMVENSVAI (548 aa)). Residue serine 149 is modified to Phosphoserine. Positions 361, 366, 541, 545, and 663 each coordinate Fe cation.

This sequence belongs to the lipoxygenase family. Interacts with PEBP1; in response to IL13/interleukin-13, prevents the interaction of PEBP1 with RAF1 to activate the ERK signaling cascade. It depends on Fe cation as a cofactor. As to expression, detected in leukocytes, lung and aorta.

It is found in the cytoplasm. Its subcellular location is the cytosol. The protein resides in the cell membrane. The protein localises to the lipid droplet. It carries out the reaction (5Z,8Z,11Z,14Z)-eicosatetraenoate + O2 = (12S)-hydroperoxy-(5Z,8Z,10E,14Z)-eicosatetraenoate. It catalyses the reaction (5Z,8Z,11Z,14Z)-eicosatetraenoate + O2 = (15S)-hydroperoxy-(5Z,8Z,11Z,13E)-eicosatetraenoate. The catalysed reaction is (9Z,12Z)-octadecadienoate + O2 = (13S)-hydroperoxy-(9Z,11E)-octadecadienoate. The enzyme catalyses (12S)-hydroperoxy-(5Z,8Z,10E,14Z)-eicosatetraenoate = (8S)-hydroxy-(11S,12S)-epoxy-(5Z,9E,14Z)-eicosatrienoate. It carries out the reaction (5Z,8Z,11Z,14Z)-eicosatetraenoate + 2 O2 = (14R,15S)-dihydroperoxy-(5Z,8Z,10E,12E)-eicosatetraenoate. It catalyses the reaction (5Z,8Z,11Z,14Z)-eicosatetraenoate + 2 O2 = (8S,15S)-dihydroperoxy-(5Z,9E,11Z,13E)-eicosatetraenoate. The catalysed reaction is (14S,15R)-epoxy-(5Z,8Z,11Z)-eicosatrienoate + O2 = (8S)-hydroperoxy-(14S,15R)-epoxy-(5Z,9E,11Z)-eicosatrienoate. The enzyme catalyses (14S,15R)-epoxy-(5Z,8Z,11Z)-eicosatrienoate + O2 = (12S)-hydroperoxy-(14S,15R)-epoxy-(5Z,8Z,10E)-eicosatrienoate. It carries out the reaction (14R,15S)-epoxy-(5Z,8Z,11Z)-eicosatrienoate + O2 = (5S)-hydroperoxy-(14R,15S)-epoxy-(6E,8Z,11Z)-eicosatrienoate. It catalyses the reaction (14R,15S)-epoxy-(5Z,8Z,11Z)-eicosatrienoate + O2 = (12S)-hydroperoxy-(14R,15S)-epoxy-(5Z,8Z,10E)-eicosatrienoate. The catalysed reaction is (15R)-hydroperoxy-(5Z,8Z,11Z,13E)-eicosatetraenoate = 15-oxo-(5Z,8Z,11Z,13E)-eicosatetraenoate + H2O. The enzyme catalyses (15S)-hydroperoxy-(5Z,8Z,11Z,13E)-eicosatetraenoate = (14S,15S)-epoxy-(5Z,8Z,10E,12E)-eicosatetraenoate + H2O. It carries out the reaction (4Z,7Z,10Z,13Z,16Z)-docosapentaenoate + O2 = 14-hydroperoxy-(4Z,7Z,10Z,12E,16Z)-docosapentaenoate. It catalyses the reaction (7Z,10Z,13Z,16Z,19Z)-docosapentaenoate + O2 = 14-hydroperoxy-(7Z,10Z,12E,16Z,19Z)-docosapentaenoate. The catalysed reaction is (4Z,7Z,10Z,13Z,16Z,19Z)-docosahexaenoate + O2 = (14S)-hydroperoxy-(4Z,7Z,10Z,12E,16Z,19Z)-docosahexaenoate. The enzyme catalyses (4Z,7Z,10Z,13Z,16Z,19Z)-docosahexaenoate + O2 = (17S)-hydroperoxy-(4Z,7Z,10Z,13Z,15E,19Z)-docosahexaenoate. It carries out the reaction (7S)-hydroperoxy-(4Z,8E,10Z,13Z,16Z,19Z)-docosahexaenoate + O2 = (7S,14S)-dihydroperoxy-(4Z,8E,10Z,12E,16Z,19Z)-docosahexaenoate. It catalyses the reaction (7S)-hydroperoxy-(4Z,8E,10Z,13Z,16Z,19Z)-docosahexaenoate + O2 = (7S,17S)-dihydroperoxy-(4Z,8E,10Z,13Z,15E,19Z)-docosahexaenoate. The catalysed reaction is (4Z,7Z,10Z,13Z,16Z,19Z)-docosahexaenoate + O2 = (11S)-hydroperoxy-(4Z,7Z,9E,13Z,16Z,19Z)-docosahexaenoate. The enzyme catalyses N-(5Z,8Z,11Z,14Z)-eicosatetraenoyl-taurine + O2 = N-(12S)-hydroperoxy-(5Z,8Z,10E,14Z)-eicosatetraenoyl-taurine. It carries out the reaction N-(5Z,8Z,11Z,14Z)-eicosatetraenoyl-gamma-aminobutanoate + O2 = N-(12S)-hydroperoxy-(5Z,8Z,10E,14Z)-eicosatetraenoyl-gamma-aminobutanoate. It catalyses the reaction N-(5Z,8Z,11Z,14Z)-eicosatetraenoyl-glycine + O2 = N-(12S)-hydroperoxy-(5Z,8Z,10E,14Z)-eicosatetraenoyl-glycine. The catalysed reaction is N-(5Z,8Z,11Z,14Z)-eicosatetraenoyl-L-alanine + O2 = N-(12S)-hydroperoxy-(5Z,8Z,10E,14Z)-eicosatetraenoyl-alanine. The enzyme catalyses N-(5Z,8Z,11Z,14Z)-eicosatetraenoyl-taurine + O2 = N-(15S)-hydroperoxy-(5Z,8Z,11Z,13E)-eicosatetraenoyl-taurine. It carries out the reaction N-(5Z,8Z,11Z,14Z)-eicosatetraenoyl-gamma-aminobutanoate + O2 = N-(15S)-hydroperoxy-(5Z,8Z,11Z,13E)-eicosatetraenoyl-gamma-aminobutanoate. It catalyses the reaction N-(5Z,8Z,11Z,14Z)-eicosatetraenoyl-glycine + O2 = N-(15S)-hydroperoxy-(5Z,8Z,11Z,13E)-eicosatetraenoyl-glycine. The catalysed reaction is N-(5Z,8Z,11Z,14Z)-eicosatetraenoyl-L-alanine + O2 = N-(15S)-hydroperoxy-(5Z,8Z,11Z,13E)-eicosatetraenoyl-alanine. The protein operates within lipid metabolism; hydroperoxy eicosatetraenoic acid biosynthesis. Non-heme iron-containing dioxygenase that catalyzes the stereo-specific peroxidation of free and esterified polyunsaturated fatty acids generating a spectrum of bioactive lipid mediators. It inserts peroxyl groups at C12 or C15 of arachidonate ((5Z,8Z,11Z,14Z)-eicosatetraenoate) producing both 12-hydroperoxyeicosatetraenoate/12-HPETE and 15-hydroperoxyeicosatetraenoate/15-HPETE. It may then act on 12-HPETE to produce hepoxilins, which may show pro-inflammatory properties. Can also peroxidize linoleate ((9Z,12Z)-octadecadienoate) to 13-hydroperoxyoctadecadienoate. May participate in the sequential oxidations of DHA ((4Z,7Z,10Z,13Z,16Z,19Z)-docosahexaenoate) to generate specialized pro-resolving mediators (SPMs)like resolvin D5 ((7S,17S)-diHPDHA) and (7S,14S)-diHPDHA, that actively down-regulate the immune response and have anti-aggregation properties with platelets. Can convert epoxy fatty acids to hydroperoxy-epoxides derivatives followed by an intramolecular nucleophilic substitution leading to the formation of monocyclic endoperoxides. Plays an important role during the maintenance of self-tolerance by peroxidizing membrane-bound phosphatidylethanolamine which can then signal the sorting process for clearance of apoptotic cells during inflammation and prevent an autoimmune response. In addition to its role in the immune and inflammatory responses, this enzyme may play a role in epithelial wound healing in the cornea through production of lipoxin A4 (LXA(4)) and docosahexaenoic acid-derived neuroprotectin D1 (NPD1; 10R,17S-HDHA), both lipid autacoids exhibit anti-inflammatory and neuroprotective properties. Furthermore, it may regulate actin polymerization which is crucial for several biological processes such as the phagocytosis of apoptotic cells. It is also implicated in the generation of endogenous ligands for peroxisome proliferator activated receptor (PPAR-gamma), hence modulating macrophage development and function. It may also exert a negative effect on skeletal development by regulating bone mass through this pathway. As well as participates in ER stress and downstream inflammation in adipocytes, pancreatic islets, and liver. Finally, it is also involved in the cellular response to IL13/interleukin-13. This is Polyunsaturated fatty acid lipoxygenase ALOX15 from Rattus norvegicus (Rat).